Reading from the N-terminus, the 213-residue chain is Kynurenine formamidase (213 aa).

W20 contacts substrate. Positions 50, 54, and 56 each coordinate Zn(2+). H60 functions as the Proton donor/acceptor in the catalytic mechanism. 2 residues coordinate Zn(2+): H161 and E173.

The protein belongs to the Cyclase 1 superfamily. KynB family. As to quaternary structure, homodimer. Requires Zn(2+) as cofactor.

The catalysed reaction is N-formyl-L-kynurenine + H2O = L-kynurenine + formate + H(+). The protein operates within amino-acid degradation; L-tryptophan degradation via kynurenine pathway; L-kynurenine from L-tryptophan: step 2/2. Catalyzes the hydrolysis of N-formyl-L-kynurenine to L-kynurenine, the second step in the kynurenine pathway of tryptophan degradation. This chain is Kynurenine formamidase, found in Pseudomonas paraeruginosa (strain DSM 24068 / PA7) (Pseudomonas aeruginosa (strain PA7)).